Reading from the N-terminus, the 200-residue chain is NAD(P)H dehydrogenase (quinone) (200 aa).

Residues 4–191 (VLVLYYSSYG…DIARYQGKHV (188 aa)) enclose the Flavodoxin-like domain. FMN-binding positions include 10 to 15 (SSYGHV) and 79 to 81 (TRF). Tyr12 contacts NAD(+). Trp99 contacts substrate. FMN contacts are provided by residues 114-120 (STGTQHG) and His135.

The protein belongs to the WrbA family. It depends on FMN as a cofactor.

It carries out the reaction a quinone + NADH + H(+) = a quinol + NAD(+). The enzyme catalyses a quinone + NADPH + H(+) = a quinol + NADP(+). This chain is NAD(P)H dehydrogenase (quinone), found in Burkholderia vietnamiensis (strain G4 / LMG 22486) (Burkholderia cepacia (strain R1808)).